A 92-amino-acid chain; its full sequence is Neuropeptide F (92 aa).

Residues 1 to 27 (MSQSRPLALLVVAALVAAAVLVAAAEA) form the signal peptide. Positions 28-51 (QQADGNKLEGLADALKYLQELDRY) are excised as a propeptide. At phenylalanine 60 the chain carries Phenylalanine amide. Positions 64 to 92 (AELRPDVVDDVIPEEMSADKFWRRFARRR) are excised as a propeptide.

This sequence belongs to the NPY family. In terms of tissue distribution, widely expressed in the nervous system. Expressed in corpora cardiaca, hypocerebral ganglion, frontal ganglion, protocerebrum, antennal lobe, tritocerebrum and thoracic ganglia. Not detected in corpora allata, pars intercerebralis, circumesophageal connectives, subesophageal ganglion, abdominal ganglion and abdominal perisympathetic organs.

The protein localises to the secreted. In terms of biological role, accelerates ovarian maturation in females. The chain is Neuropeptide F from Locusta migratoria (Migratory locust).